We begin with the raw amino-acid sequence, 253 residues long: tRNA pseudouridine synthase A (253 aa).

D53 (nucleophile) is an active-site residue. Substrate is bound at residue Y111.

Belongs to the tRNA pseudouridine synthase TruA family. In terms of assembly, homodimer.

It carries out the reaction uridine(38/39/40) in tRNA = pseudouridine(38/39/40) in tRNA. Its function is as follows. Formation of pseudouridine at positions 38, 39 and 40 in the anticodon stem and loop of transfer RNAs. This Chlorobium luteolum (strain DSM 273 / BCRC 81028 / 2530) (Pelodictyon luteolum) protein is tRNA pseudouridine synthase A.